The following is a 423-amino-acid chain: ATP-citrate synthase alpha chain protein 1 (423 aa).

Residues asparagine 343, threonine 345, and arginine 376 each contribute to the citrate site.

Belongs to the succinate/malate CoA ligase beta subunit family. In terms of assembly, heterooctamer of 4 alpha and 4 beta chains. In terms of tissue distribution, expressed in trichomes, epidermal leaf cells, anther tapetal cells, stigma and in young vascular bundles of expanding leaves, cotyledons, roots, pedicel of flowers and siliques.

It localises to the cytoplasm. It is found in the cytosol. It catalyses the reaction oxaloacetate + acetyl-CoA + ADP + phosphate = citrate + ATP + CoA. In terms of biological role, ATP citrate-lyase is the primary enzyme responsible for the synthesis of cytosolic acetyl-CoA, used for the elongation of fatty acids and biosynthesis of isoprenoids, flavonoids and malonated derivatives. May supply substrate to the cytosolic acetyl-CoA carboxylase, which generates the malonyl-CoA used for the synthesis of a multitude of compounds, including very long chain fatty acids and flavonoids. Required for normal growth and development and elongation of C18 fatty acids to C20 to C24 fatty acids in seeds. In contrast to all known animal ACL enzymes having a homomeric structure, plant ACLs are composed of alpha and beta chains. The polypeptide is ATP-citrate synthase alpha chain protein 1 (ACLA-1) (Arabidopsis thaliana (Mouse-ear cress)).